The sequence spans 663 residues: Glucans biosynthesis glucosyltransferase H (663 aa).

The next 6 helical transmembrane spans lie at 64 to 86, 101 to 123, 413 to 435, 470 to 492, 558 to 580, and 584 to 606; these read WMLG…DTIA, LAPL…VVLM, LVIG…AGLI, AWAM…ILVL, EAWA…FWFT, and LTAT…LGAH.

The protein belongs to the glycosyltransferase 2 family. OpgH subfamily.

The protein resides in the cell inner membrane. Its pathway is glycan metabolism; osmoregulated periplasmic glucan (OPG) biosynthesis. Functionally, involved in the biosynthesis of osmoregulated periplasmic glucans (OPGs). The sequence is that of Glucans biosynthesis glucosyltransferase H from Caulobacter vibrioides (strain ATCC 19089 / CIP 103742 / CB 15) (Caulobacter crescentus).